Consider the following 86-residue polypeptide: Collagen alpha-1(XII) chain (86 aa).

The span at 1 to 12 (NQPGPPGPPGPP) shows a compositional bias: pro residues. A disordered region spans residues 1-86 (NQPGPPGPPG…PGRPGDSGIR (86 aa)). P6, P9, P12, P18, P24, P27, P30, P42, P51, P54, P65, P74, P77, and P80 each carry hydroxyproline. The segment covering 16–25 (GEPGPGGRPG) has biased composition (gly residues). Low complexity predominate over residues 35 to 50 (PQGERGLPGEXGERGL). Residues 57-71 (QGESRTGPPGSTGSR) are compositionally biased toward low complexity.

The protein belongs to the fibril-associated collagens with interrupted helices (FACIT) family. As to quaternary structure, trimer of identical chains each containing 190 kDa of non-triple-helical sequences. The triple-helical tail is stabilized by disulfide bonds at each end. In terms of processing, prolines at the third position of the tripeptide repeating unit (G-X-Y) are hydroxylated in some or all of the chains.

The protein localises to the secreted. It localises to the extracellular space. It is found in the extracellular matrix. Functionally, type XII collagen interacts with type I collagen-containing fibrils, the COL1 domain could be associated with the surface of the fibrils, and the COL2 and NC3 domains may be localized in the perifibrillar matrix. This Bos taurus (Bovine) protein is Collagen alpha-1(XII) chain (COL12A1).